The chain runs to 876 residues: Leucine--tRNA ligase (876 aa).

Residues 42–52 (PYPSGKLHMGH) carry the 'HIGH' region motif. The 'KMSKS' region signature appears at 634-638 (KMGKS). Lys637 provides a ligand contact to ATP.

The protein belongs to the class-I aminoacyl-tRNA synthetase family.

The protein resides in the cytoplasm. It catalyses the reaction tRNA(Leu) + L-leucine + ATP = L-leucyl-tRNA(Leu) + AMP + diphosphate. The protein is Leucine--tRNA ligase of Variovorax paradoxus (strain S110).